The primary structure comprises 124 residues: Ribonuclease pancreatic (124 aa).

Residues Lys-7 and Arg-10 each contribute to the substrate site. His-12 (proton acceptor) is an active-site residue. 4 disulfide bridges follow: Cys-26-Cys-84, Cys-40-Cys-95, Cys-58-Cys-110, and Cys-65-Cys-72. Residue Asn-34 is glycosylated (N-linked (GlcNAc...) asparagine). Substrate contacts are provided by residues 41–45 (KPVNT), Lys-66, and Arg-85. His-119 functions as the Proton donor in the catalytic mechanism.

It belongs to the pancreatic ribonuclease family. As to quaternary structure, monomer. Interacts with and forms tight 1:1 complexes with RNH1. Dimerization of two such complexes may occur. Interaction with RNH1 inhibits this protein. As to expression, pancreas.

It localises to the secreted. The catalysed reaction is an [RNA] containing cytidine + H2O = an [RNA]-3'-cytidine-3'-phosphate + a 5'-hydroxy-ribonucleotide-3'-[RNA].. It carries out the reaction an [RNA] containing uridine + H2O = an [RNA]-3'-uridine-3'-phosphate + a 5'-hydroxy-ribonucleotide-3'-[RNA].. In terms of biological role, endonuclease that catalyzes the cleavage of RNA on the 3' side of pyrimidine nucleotides. Acts on single-stranded and double-stranded RNA. In Eudorcas thomsonii (Thomson's gazelle), this protein is Ribonuclease pancreatic (RNASE1).